Here is a 282-residue protein sequence, read N- to C-terminus: Probable porphobilinogen deaminase (282 aa).

Position 233 is an S-(dipyrrolylmethanemethyl)cysteine (Cys-233).

It belongs to the HMBS family. Requires dipyrromethane as cofactor.

The catalysed reaction is 4 porphobilinogen + H2O = hydroxymethylbilane + 4 NH4(+). It participates in porphyrin-containing compound metabolism; protoporphyrin-IX biosynthesis; coproporphyrinogen-III from 5-aminolevulinate: step 2/4. Its function is as follows. Tetrapolymerization of the monopyrrole PBG into the hydroxymethylbilane pre-uroporphyrinogen in several discrete steps. The sequence is that of Probable porphobilinogen deaminase from Picrophilus torridus (strain ATCC 700027 / DSM 9790 / JCM 10055 / NBRC 100828 / KAW 2/3).